Here is a 525-residue protein sequence, read N- to C-terminus: ATP synthase subunit alpha (525 aa).

ATP is bound at residue 169-176 (GDRQTGKT).

This sequence belongs to the ATPase alpha/beta chains family. In terms of assembly, F-type ATPases have 2 components, CF(1) - the catalytic core - and CF(0) - the membrane proton channel. CF(1) has five subunits: alpha(3), beta(3), gamma(1), delta(1), epsilon(1). CF(0) has three main subunits: a(1), b(2) and c(9-12). The alpha and beta chains form an alternating ring which encloses part of the gamma chain. CF(1) is attached to CF(0) by a central stalk formed by the gamma and epsilon chains, while a peripheral stalk is formed by the delta and b chains.

It is found in the cell membrane. It catalyses the reaction ATP + H2O + 4 H(+)(in) = ADP + phosphate + 5 H(+)(out). In terms of biological role, produces ATP from ADP in the presence of a proton gradient across the membrane. The alpha chain is a regulatory subunit. This is ATP synthase subunit alpha from Mycoplasma capricolum subsp. capricolum (strain California kid / ATCC 27343 / NCTC 10154).